Consider the following 385-residue polypeptide: Transcription factor-like protein DPB (385 aa).

Disordered regions lie at residues 1–53 and 71–102; these read MTTT…EQTI and DIQG…KTGR. A compositionally biased stretch (polar residues) spans 22–31; that stretch reads PSTRSWGTAV. A compositionally biased stretch (low complexity) spans 32 to 53; sequence SGQSVSTSGSMGSPSSRSEQTI. The DNA-binding element occupies 101–184; it reads GRGLRQFSMK…KKEIQWRGLP (84 aa). The DEF box motif lies at 150–184; sequence DEKNIRRRVYDALNVLMAMDIISKDKKEIQWRGLP. Positions 185-234 form a coiled coil; that stretch reads RTSLSDIEELKNERLSLRNRIEKKTAYSQELEEQYVGLQNLIQRNEHLYS. Residues 296–385 form a disordered region; it reads PPQQPNGRNN…IMNSSMKPEN (90 aa). Polar residues predominate over residues 300 to 327; sequence PNGRNNSQLVCHNFTPENPNKGPSTGPT. Over residues 336 to 349 the composition is skewed to low complexity; sequence HLQSQQHQQHSQLQ. Positions 355 to 364 are enriched in polar residues; that stretch reads ETNNVTSSAD.

Belongs to the E2F/DP family. In terms of assembly, heterodimer with non-phosphorylated E2FC. No interaction with phosphorylated E2FC. Interacts preferentially with E2FC, but also with E2FA and E2FB. Interacts with SKP2A. Targeted for proteasomal degradation by the SCF(SKP2A) E3 ubiquitin ligase complex. Post-translationally, phosphorylated. As to expression, ubiquitous.

It localises to the nucleus. It is found in the cytoplasm. In terms of biological role, involved in the regulation of the G1/S transition. Increases the DNA binding activity of E2F proteins after heterodimerization. The complex DPB/E2FC restricts cell division and lateral root initiation and may function as a negative regulator of E2F-regulated genes. The interaction with SKP2A is controlled by auxin. The polypeptide is Transcription factor-like protein DPB (DPB) (Arabidopsis thaliana (Mouse-ear cress)).